A 248-amino-acid chain; its full sequence is 4-hydroxy-tetrahydrodipicolinate reductase (248 aa).

NAD(+)-binding positions include Gly-9 to Val-14, Gly-77 to Thr-79, and Ala-104 to Phe-107. His-134 (proton donor/acceptor) is an active-site residue. Residue His-135 participates in (S)-2,3,4,5-tetrahydrodipicolinate binding. Lys-138 serves as the catalytic Proton donor. Gly-144 to Thr-145 is a (S)-2,3,4,5-tetrahydrodipicolinate binding site.

Belongs to the DapB family.

Its subcellular location is the cytoplasm. It catalyses the reaction (S)-2,3,4,5-tetrahydrodipicolinate + NAD(+) + H2O = (2S,4S)-4-hydroxy-2,3,4,5-tetrahydrodipicolinate + NADH + H(+). The enzyme catalyses (S)-2,3,4,5-tetrahydrodipicolinate + NADP(+) + H2O = (2S,4S)-4-hydroxy-2,3,4,5-tetrahydrodipicolinate + NADPH + H(+). It participates in amino-acid biosynthesis; L-lysine biosynthesis via DAP pathway; (S)-tetrahydrodipicolinate from L-aspartate: step 4/4. Its function is as follows. Catalyzes the conversion of 4-hydroxy-tetrahydrodipicolinate (HTPA) to tetrahydrodipicolinate. The chain is 4-hydroxy-tetrahydrodipicolinate reductase from Corynebacterium glutamicum (strain R).